A 297-amino-acid polypeptide reads, in one-letter code: Thoeris protein ThsA (297 aa).

2 helical membrane-spanning segments follow: residues 32 to 52 (ALSI…FLDL) and 57 to 77 (RLII…VQFI).

The protein resides in the cell membrane. Activated by a signal molecule generated by ThsB. Probable membrane protein component of the Thoeris antiviral defense system, composed of ThsA and ThsB. Expression of ThsA and ThsB in B.subtilis (strain BEST7003) confers resistance to phages SBSphiC, SBSphiJ and SPO1. Activation by a signal generated by ThsB leads to phage resistance. In Bacillus amyloliquefaciens (strain Y2) (Bacillus amyloliquefaciens subsp. plantarum (strain B9601-Y2)), this protein is Thoeris protein ThsA.